The following is a 187-amino-acid chain: UPF0301 protein ESA_00394 (187 aa).

It belongs to the UPF0301 (AlgH) family.

The polypeptide is UPF0301 protein ESA_00394 (Cronobacter sakazakii (strain ATCC BAA-894) (Enterobacter sakazakii)).